The sequence spans 353 residues: Keratocan (353 aa).

Positions 1-21 (MMTLKVCPSLLLLFLVHSVWT) are cleaved as a signal peptide. One can recognise an LRRNT domain in the interval 34–72 (EHWSHYTFECPQECFCPPSFPNALYCDNKGLKEIPAIPA). 2 cysteine pairs are disulfide-bonded: cysteine 43–cysteine 49 and cysteine 47–cysteine 59. 10 LRR repeats span residues 73 to 94 (RIWYLYLQNNLIETISEKPFVN), 97 to 118 (HLRWINLNKNKITNNGIESGVL), 123 to 143 (RLLYLFLEDNELEEVPAPLPV), 144 to 165 (GLEQLRLARNKISRIPEGVFSN), 168 to 188 (NLTMLDLHQNNLLDSALQSDT), 194 to 214 (SLMQLNIAKNSLKKMPLSIPA), 215 to 236 (NTLQLFLDNNSIEVIPENYFSA), 239 to 262 (KVTFLRLNYNKLSDDGIPPNGFNV), 264 to 283 (SILDLQLSHNQLTKIPPINA), and 284 to 305 (HLEHLHLDHNRIKSVNGTQICP). N-linked (GlcNAc...) (keratan sulfate) asparagine glycosylation is present at asparagine 94. The N-linked (GlcNAc...) asparagine glycan is linked to asparagine 168. Residues asparagine 223 and asparagine 261 are each glycosylated (N-linked (GlcNAc...) (keratan sulfate) asparagine). Asparagine 299 carries an N-linked (GlcNAc...) asparagine glycan. The cysteines at positions 304 and 344 are disulfide-linked.

It belongs to the small leucine-rich proteoglycan (SLRP) family. SLRP class II subfamily. In terms of processing, binds keratan sulfate chains.

The protein resides in the secreted. It localises to the extracellular space. It is found in the extracellular matrix. Functionally, plays an important role in generating and maintaining a transparent matrix within the corneal stroma. The chain is Keratocan (KERA) from Gallus gallus (Chicken).